The following is a 322-amino-acid chain: Endochitinase (322 aa).

The first 21 residues, 1–21 (MKMRYCVLVSVLAILVIRGSA), serve as a signal peptide directing secretion. Residues 22 to 62 (ENCGRQAGGALCPGGQCCSKWGWCGTTPDHCGTDCQSQCGG) enclose the Chitin-binding type-1 domain. 4 cysteine pairs are disulfide-bonded: Cys-24-Cys-39, Cys-33-Cys-45, Cys-38-Cys-52, and Cys-56-Cys-60.

This sequence belongs to the glycosyl hydrolase 19 family. Chitinase class I subfamily.

The catalysed reaction is Random endo-hydrolysis of N-acetyl-beta-D-glucosaminide (1-&gt;4)-beta-linkages in chitin and chitodextrins.. Its function is as follows. Defense against chitin-containing fungal pathogens. This Actinidia chinensis var. chinensis (Chinese soft-hair kiwi) protein is Endochitinase.